A 424-amino-acid polypeptide reads, in one-letter code: Elongator complex protein 4 (424 aa).

This sequence belongs to the ELP4 family. In terms of assembly, component of the elongator complex which consists of ELP1, ELP2, ELP3, ELP4, ELP5 and ELP6. Widely expressed.

Its subcellular location is the cytoplasm. It localises to the nucleus. Its pathway is tRNA modification; 5-methoxycarbonylmethyl-2-thiouridine-tRNA biosynthesis. Functionally, component of the elongator complex which is required for multiple tRNA modifications, including mcm5U (5-methoxycarbonylmethyl uridine), mcm5s2U (5-methoxycarbonylmethyl-2-thiouridine), and ncm5U (5-carbamoylmethyl uridine). The elongator complex catalyzes the formation of carboxymethyluridine in the wobble base at position 34 in tRNAs. This is Elongator complex protein 4 (ELP4) from Homo sapiens (Human).